We begin with the raw amino-acid sequence, 445 residues long: Probable D-serine dehydratase (445 aa).

Position 111 is an N6-(pyridoxal phosphate)lysine (Lys-111).

This sequence belongs to the serine/threonine dehydratase family. DsdA subfamily. Pyridoxal 5'-phosphate serves as cofactor.

The enzyme catalyses D-serine = pyruvate + NH4(+). This is Probable D-serine dehydratase from Burkholderia pseudomallei (strain 1710b).